A 212-amino-acid chain; its full sequence is Pyridoxine/pyridoxamine 5'-phosphate oxidase 1 (212 aa).

Substrate contacts are provided by residues 8–11 and lysine 66; that span reads RTDY. FMN is bound by residues 61 to 66, 76 to 77, lysine 83, and glutamine 105; these read RIVLLK and FT. Residues tyrosine 123, arginine 127, and serine 131 each contribute to the substrate site. FMN is bound by residues 140-141 and tryptophan 184; that span reads QS. Residue 190-192 coordinates substrate; that stretch reads RLH. Arginine 194 contacts FMN.

The protein belongs to the pyridoxamine 5'-phosphate oxidase family. In terms of assembly, homodimer. FMN is required as a cofactor.

It carries out the reaction pyridoxamine 5'-phosphate + O2 + H2O = pyridoxal 5'-phosphate + H2O2 + NH4(+). The enzyme catalyses pyridoxine 5'-phosphate + O2 = pyridoxal 5'-phosphate + H2O2. Its pathway is cofactor metabolism; pyridoxal 5'-phosphate salvage; pyridoxal 5'-phosphate from pyridoxamine 5'-phosphate: step 1/1. The protein operates within cofactor metabolism; pyridoxal 5'-phosphate salvage; pyridoxal 5'-phosphate from pyridoxine 5'-phosphate: step 1/1. Its function is as follows. Catalyzes the oxidation of either pyridoxine 5'-phosphate (PNP) or pyridoxamine 5'-phosphate (PMP) into pyridoxal 5'-phosphate (PLP). This Ralstonia nicotianae (strain ATCC BAA-1114 / GMI1000) (Ralstonia solanacearum) protein is Pyridoxine/pyridoxamine 5'-phosphate oxidase 1.